Consider the following 115-residue polypeptide: MPPIIPLNLTLSHILGRIQRKYPNATIDAQRISAHMGEFRVLECYFNMTRVAIRAITYPQDENGKESCASGEVHYHWACFCGVSPNLQVYIIHYKPSGNNVQQKKKNNENLAVRK.

This is an uncharacterized protein from Caenorhabditis elegans.